A 462-amino-acid polypeptide reads, in one-letter code: Glycine--tRNA ligase (462 aa).

Arg100 and Glu174 together coordinate substrate. Residues 206–208, 216–221, 290–291, and 334–337 each bind ATP; these read RNE, FRTREF, EL, and GADR. Position 221–225 (221–225) interacts with substrate; it reads FEQME. 330 to 334 provides a ligand contact to substrate; sequence EPSLG.

It belongs to the class-II aminoacyl-tRNA synthetase family. Homodimer.

It localises to the cytoplasm. The enzyme catalyses tRNA(Gly) + glycine + ATP = glycyl-tRNA(Gly) + AMP + diphosphate. Its function is as follows. Catalyzes the attachment of glycine to tRNA(Gly). This chain is Glycine--tRNA ligase, found in Ruminiclostridium cellulolyticum (strain ATCC 35319 / DSM 5812 / JCM 6584 / H10) (Clostridium cellulolyticum).